We begin with the raw amino-acid sequence, 176 residues long: Protein GrpE (176 aa).

This sequence belongs to the GrpE family. As to quaternary structure, homodimer.

Its subcellular location is the cytoplasm. In terms of biological role, participates actively in the response to hyperosmotic and heat shock by preventing the aggregation of stress-denatured proteins, in association with DnaK and GrpE. It is the nucleotide exchange factor for DnaK and may function as a thermosensor. Unfolded proteins bind initially to DnaJ; upon interaction with the DnaJ-bound protein, DnaK hydrolyzes its bound ATP, resulting in the formation of a stable complex. GrpE releases ADP from DnaK; ATP binding to DnaK triggers the release of the substrate protein, thus completing the reaction cycle. Several rounds of ATP-dependent interactions between DnaJ, DnaK and GrpE are required for fully efficient folding. This chain is Protein GrpE, found in Thermoplasma volcanium (strain ATCC 51530 / DSM 4299 / JCM 9571 / NBRC 15438 / GSS1).